The chain runs to 897 residues: Alanine--tRNA ligase (897 aa).

4 residues coordinate Zn(2+): histidine 581, histidine 585, cysteine 684, and histidine 688.

Belongs to the class-II aminoacyl-tRNA synthetase family. It depends on Zn(2+) as a cofactor.

The protein resides in the cytoplasm. The catalysed reaction is tRNA(Ala) + L-alanine + ATP = L-alanyl-tRNA(Ala) + AMP + diphosphate. Catalyzes the attachment of alanine to tRNA(Ala) in a two-step reaction: alanine is first activated by ATP to form Ala-AMP and then transferred to the acceptor end of tRNA(Ala). Also edits incorrectly charged Ser-tRNA(Ala) and Gly-tRNA(Ala) via its editing domain. In Mycobacterium sp. (strain KMS), this protein is Alanine--tRNA ligase.